We begin with the raw amino-acid sequence, 99 residues long: Malonate decarboxylase acyl carrier protein (99 aa).

O-(phosphoribosyl dephospho-coenzyme A)serine is present on Ser25.

Belongs to the MdcC family. Covalently binds the prosthetic group of malonate decarboxylase.

It is found in the cytoplasm. Functionally, subunit of malonate decarboxylase, it is an acyl carrier protein to which acetyl and malonyl thioester residues are bound via a 2'-(5''-phosphoribosyl)-3'-dephospho-CoA prosthetic group and turn over during the catalytic mechanism. This Pseudomonas putida (Arthrobacter siderocapsulatus) protein is Malonate decarboxylase acyl carrier protein.